The following is a 144-amino-acid chain: uncharacterized protein (144 aa).

Residues 48–119 (ELNKLKAKAD…KETEEPKMEL (72 aa)) adopt a coiled-coil conformation.

This is an uncharacterized protein from Archaeoglobus fulgidus (strain ATCC 49558 / DSM 4304 / JCM 9628 / NBRC 100126 / VC-16).